Consider the following 779-residue polypeptide: Angiomotin-like protein 2 (779 aa).

Disordered regions lie at residues 41 to 215 and 263 to 308; these read GGAG…QYPH and QYLQ…TSGS. Basic and acidic residues-rich tracts occupy residues 100 to 112 and 141 to 152; these read KGEE…EAKA and RRQDEALRELRH. A required for interaction with CDH5 region spans residues 101 to 307; sequence GEELPTYEEA…SAQASSATSG (207 aa). Tyrosine 107 is subject to Phosphotyrosine; by FGFR1. The segment covering 160–169 has biased composition (low complexity); the sequence is ERLLQLSLER. Positions 177–193 are enriched in polar residues; it reads HMSSSHSFPQLARNQQG. The segment covering 196 to 213 has biased composition (pro residues); that stretch reads LRGPPAEGPESRGPPPQY. The required for interaction with CDH1 stretch occupies residues 220–307; the sequence is HETTTAVTDP…SAQASSATSG (88 aa). Positions 298–308 are enriched in low complexity; that stretch reads SAQASSATSGS. Positions 308-581 form a coiled coil; that stretch reads SAHLAQMEAV…KYLEERAMRQ (274 aa). Residues lysine 347 and lysine 408 each participate in a glycyl lysine isopeptide (Lys-Gly) (interchain with G-Cter in ubiquitin) cross-link. 2 disordered regions span residues 522 to 543 and 679 to 753; these read RAQQ…SPEL and TQGW…GCSS. Residues 530–539 show a composition bias toward gly residues; it reads APGGSSGSGG. Composition is skewed to polar residues over residues 680-690 and 725-740; these read QGWQGLSSSER and DGST…TSTC. Residues serine 759 and serine 762 each carry the phosphoserine modification. The PDZ-binding signature appears at 776–779; that stretch reads EILI.

This sequence belongs to the angiomotin family. As to quaternary structure, part of a complex composed of AMOTL2, MAGI1 and CDH5, within the complex AMOTL2 acts as a scaffold protein for the interaction of MAGI1 with CDH5. The complex is required for coupling actin fibers to cell junctions in endothelial cells. Within the complex AMOTL2 (via its N-terminus) interacts with CDH5. Interacts (via N-terminus) with MAGI1. Interacts (via N-terminus) with ACTB; the interaction facilitates binding of cell junction complexes to actin fibers in endothelial cells. Interacts with CDH1; the interaction may facilitate binding of radial actin fibers to cell junction complexes. Interacts with SRC. Interacts with YAP1; the interaction is required for ubiquitination of AMOTL2 and localization of YAP1 to tight junctions. Interacts with WWP1; the interaction facilitates WWP1 interaction with the Crumbs complex and subsequent WWP1 translocation to the plasma membrane. WWP1 interaction with the Crumbs complex promotes WWP1 monoubiquitination of AMOTL2 which subsequently activates the Hippo signaling pathway. When ubiquitinated interacts with LATS2 (via UBA domain); the interaction promotes LATS2 phosphorylation of YAP1. Interacts (via PPXY motif) with WWTR1/TAZ (via WW domain); the interaction promotes WWTR1/TAZ localization to the cytoplasm and thereby inhibition of its transcriptional properties. Interacts with PHLDB2; interaction may facilitate PHLDB2 localization to the myotube podosome cortex that surrounds the core. In terms of processing, monoubiquitinated at Lys-347 and Lys-408 by Crumbs complex-bound WWP1. De-ubiquitinated at Lys-347 and Lys-408 by USP9X; the interaction may be promoted by cell contact inhibition. Deubiquitination of AMOTL2 negatively regulates Hippo signaling activation. Post-translationally, phosphorylation at Tyr-107 is necessary for efficient binding to SRC and synergistically functioning with SRC to activate the downstream MAPK pathway.

The protein resides in the recycling endosome. It localises to the cytoplasm. The protein localises to the cell projection. It is found in the podosome. Its subcellular location is the cell junction. Regulates the translocation of phosphorylated SRC to peripheral cell-matrix adhesion sites. Required for proper architecture of actin filaments. Plays a role in coupling actin fibers to cell junctions in endothelial cells and is therefore required for correct endothelial cell morphology via facilitating transcellular transmission of mechanical force resulting in endothelial cell elongation. Required for the anchoring of radial actin fibers to CDH1 junction complexes at the cell membrane which facilitates organization of radial actin fiber structure and cellular response to contractile forces. This contributes to maintenance of cell area, size, shape, epithelial sheet organization and trophectoderm cell properties that facilitate blastocyst zona hatching. Inhibits the Wnt/beta-catenin signaling pathway, probably by recruiting CTNNB1 to recycling endosomes and hence preventing its translocation to the nucleus. Participates in angiogenesis. Activates the Hippo signaling pathway in response to cell contact inhibition via interaction with and ubiquitination by Crumbs complex-bound WWP1. Ubiquitinated AMOTL2 then interacts with LATS2 which in turn phosphorylates YAP1, excluding it from the nucleus and localizing it to the cytoplasm and tight junctions, therefore ultimately repressing YAP1-driven transcription of target genes. Acts to inhibit WWTR1/TAZ transcriptional coactivator activity via sequestering WWTR1/TAZ in the cytoplasm and at tight junctions. Regulates the size and protein composition of the podosome cortex and core at myofibril neuromuscular junctions. Selectively promotes FGF-induced MAPK activation through SRC. May play a role in the polarity, proliferation and migration of endothelial cells. The protein is Angiomotin-like protein 2 of Homo sapiens (Human).